The following is a 355-amino-acid chain: Blue-sensitive opsin (355 aa).

The Extracellular portion of the chain corresponds to 1 to 41 (MKSRPQEFQEDFYIPIPLDTNNITALSPFLVPQDHLGGSGI). A glycan (N-linked (GlcNAc...) asparagine) is linked at Asn-22. The helical transmembrane segment at 42–66 (FMIMTVFMLFLFIGGTSINVLTIVC) threads the bilayer. At 67–78 (TVQYKKLRSHLN) the chain is on the cytoplasmic side. Residues 79–104 (YILVNLAISNLLVSTVGSFTAFVSFL) traverse the membrane as a helical segment. At 105-118 (NRYFIFGPTACKIE) the chain is on the extracellular side. Cys-115 and Cys-192 are oxidised to a cystine. A helical membrane pass occupies residues 119–138 (GFVATLGGMVSLWSLSVVAF). At 139–157 (ERWLVICKPVGNFSFKGTH) the chain is on the cytoplasmic side. Residues 158 to 181 (AIIGCALTWFFALLASTPPLFGWS) form a helical membrane-spanning segment. The Extracellular portion of the chain corresponds to 182–207 (RYIPEGLQCSCGPDWYTTENKYNNES). Asn-205 carries an N-linked (GlcNAc...) asparagine glycan. A helical transmembrane segment spans residues 208–235 (YVMFLFCFCFGFPFTVILFCYGQLLFTL). At 236–257 (KSAAKAQADSASTQKAEREVTK) the chain is on the cytoplasmic side. Residues 258 to 281 (MVVVMVMGFLVCWLPYASFALWVV) traverse the membrane as a helical segment. Over 282-289 (FNRGQSFD) the chain is Extracellular. A helical membrane pass occupies residues 290–314 (LRLGTIPSCFSKASTVYNPVIYVFM). Lys-301 bears the N6-(retinylidene)lysine mark. Residues 315 to 355 (NKQFRSCMMKLIFCGKSPFGDDEEASSSSQVTQVSSVGPEK) lie on the Cytoplasmic side of the membrane. Residues 334–355 (GDDEEASSSSQVTQVSSVGPEK) form a disordered region. Low complexity predominate over residues 340 to 355 (SSSSQVTQVSSVGPEK).

The protein belongs to the G-protein coupled receptor 1 family. Opsin subfamily. In terms of processing, phosphorylated on some or all of the serine and threonine residues present in the C-terminal region. The color pigments are found in the cone photoreceptor cells.

The protein resides in the membrane. Its function is as follows. Visual pigments are the light-absorbing molecules that mediate vision. They consist of an apoprotein, opsin, covalently linked to cis-retinal. In Psalidodon fasciatus (Banded astyanax), this protein is Blue-sensitive opsin (B23).